The chain runs to 115 residues: Ribonuclease P protein component (115 aa).

Belongs to the RnpA family. Consists of a catalytic RNA component (M1 or rnpB) and a protein subunit.

It carries out the reaction Endonucleolytic cleavage of RNA, removing 5'-extranucleotides from tRNA precursor.. Its function is as follows. RNaseP catalyzes the removal of the 5'-leader sequence from pre-tRNA to produce the mature 5'-terminus. It can also cleave other RNA substrates such as 4.5S RNA. The protein component plays an auxiliary but essential role in vivo by binding to the 5'-leader sequence and broadening the substrate specificity of the ribozyme. In Blochmanniella pennsylvanica (strain BPEN), this protein is Ribonuclease P protein component.